Reading from the N-terminus, the 434-residue chain is Enolase (434 aa).

(2R)-2-phosphoglycerate is bound at residue glutamine 163. The active-site Proton donor is glutamate 205. The Mg(2+) site is built by aspartate 242, glutamate 291, and aspartate 318. (2R)-2-phosphoglycerate is bound by residues lysine 343, arginine 372, serine 373, and lysine 394. Lysine 343 functions as the Proton acceptor in the catalytic mechanism.

Belongs to the enolase family. It depends on Mg(2+) as a cofactor.

The protein resides in the cytoplasm. Its subcellular location is the secreted. It is found in the cell surface. It localises to the cell wall. The catalysed reaction is (2R)-2-phosphoglycerate = phosphoenolpyruvate + H2O. It participates in carbohydrate degradation; glycolysis; pyruvate from D-glyceraldehyde 3-phosphate: step 4/5. Its function is as follows. Catalyzes the reversible conversion of 2-phosphoglycerate (2-PG) into phosphoenolpyruvate (PEP). It is essential for the degradation of carbohydrates via glycolysis. The polypeptide is Enolase (Streptococcus pneumoniae serotype 2 (strain D39 / NCTC 7466)).